The primary structure comprises 224 residues: Synaptogyrin-2 (224 aa).

M1 carries the post-translational modification N-acetylmethionine. The residue at position 3 (S3) is a Phosphoserine. The MARVEL domain occupies 20–171 (FLKQPQVVVR…LAFLAYQRYK (152 aa)). A run of 4 helical transmembrane segments spans residues 26-46 (VVVR…IFGE), 73-93 (AIGV…IYFP), 105-125 (VIGD…GFCF), and 147-167 (AAIT…FLAY). Positions 196 to 224 (PGVPADTYQQPPFTQNAESTEGYQPPPVY) are disordered. The span at 202–217 (TYQQPPFTQNAESTEG) shows a compositional bias: polar residues.

This sequence belongs to the synaptogyrin family. Post-translationally, may be tyrosine phosphorylated by Src.

The protein localises to the cytoplasmic vesicle membrane. Its subcellular location is the cytoplasmic vesicle. It is found in the secretory vesicle. It localises to the synaptic vesicle membrane. Its function is as follows. May play a role in regulated exocytosis. In neuronal cells, modulates the localization of synaptophysin/SYP into synaptic-like microvesicles and may therefore play a role in the formation and/or the maturation of this vesicles. May also play a role in GLUT4 storage and transport to the plasma membrane. This Bos taurus (Bovine) protein is Synaptogyrin-2.